Reading from the N-terminus, the 1045-residue chain is E3 ubiquitin-protein ligase Topors (1045 aa).

Residues 1–35 (MGSQPPLGSPLSREEGEAPPPAPASEGRRRSRRVR) are disordered. Positions 1 to 195 (MGSQPPLGSP…RERNASVYSP (195 aa)) are E3 ubiquitin-protein ligase activity. Residues 51-374 (ELAASAPARP…MAAFDQHANY (324 aa)) are required for DNA-binding. Residues Lys73, Lys76, Lys83, and Lys88 each participate in a glycyl lysine isopeptide (Lys-Gly) (interchain with G-Cter in SUMO2) cross-link. Ser98 is modified (phosphoserine). Residues 103–142 (CPICLDRFDNVSYLDRCLHKFCFRCVQEWSKNKAECPLCK) form an RING-type zinc finger. Lys159 participates in a covalent cross-link: Glycyl lysine isopeptide (Lys-Gly) (interchain with G-Cter in SUMO2). Residue Ser194 is modified to Phosphoserine. A Glycyl lysine isopeptide (Lys-Gly) (interchain with G-Cter in SUMO2) cross-link involves residue Lys249. A required for sumoylation and localization to discrete nuclear foci region spans residues 437–574 (SLLNTSDSSD…STSLSSPRNL (138 aa)). Residues 437–654 (SLLNTSDSSD…RSRTRDSSWS (218 aa)) are interaction with SUMO1. The tract at residues 442–475 (SDSSDEELVTGGATSQIQGVQTNDDLNNDSDDSS) is disordered. The segment covering 453 to 463 (GATSQIQGVQT) has biased composition (polar residues). The segment at 456 to 731 (SQIQGVQTND…RRTLSRAHYS (276 aa)) is interaction with p53/TP53. Residues 456–882 (SQIQGVQTND…GKATDTTKHH (427 aa)) form an interaction with TOP1 region. The residue at position 499 (Ser499) is a Phosphoserine. Residues 511 to 692 (ETVKTQEQEQ…RSRNRDRYYL (182 aa)) are disordered. Over residues 521 to 534 (SYSSGDSDVSRCSS) the composition is skewed to low complexity. The segment covering 539 to 565 (LGKDEQINKGHCDSSTRIKSKKEEKRS) has biased composition (basic and acidic residues). Residue Lys560 forms a Glycyl lysine isopeptide (Lys-Gly) (interchain with G-Cter in SUMO) linkage. Residues 566–578 (TSLSSPRNLNSSV) are compositionally biased toward polar residues. Ser585 is modified (phosphoserine). 3 stretches are compositionally biased toward basic residues: residues 588 to 597 (NHRHRKRGRS), 613 to 630 (KNHR…KRSR), and 637 to 647 (PRGRRDKKRSR). Positions 654–669 (SRRSQTLSLSSESTSR) are enriched in low complexity. Lys701 participates in a covalent cross-link: Glycyl lysine isopeptide (Lys-Gly) (interchain with G-Cter in SUMO2). Residues 713–936 (RDGYESSYRR…DNSGPQDPLQ (224 aa)) are disordered. Ser718 bears the Phosphoserine; by PLK1 mark. Residues 721-730 (RRRTLSRAHY) show a composition bias toward basic residues. Positions 731–747 (SRQSSSPEFRVQSFSER) are enriched in polar residues. A Phosphoserine modification is found at Ser734. 2 stretches are compositionally biased toward basic and acidic residues: residues 755–766 (NHSERKYYYYER) and 816–825 (FASKAKDSHY). Residues Lys819 and Lys837 each participate in a glycyl lysine isopeptide (Lys-Gly) (interchain with G-Cter in SUMO2) cross-link. The segment covering 854-863 (KHKRRKRKTR) has biased composition (basic residues). Residues 854 to 917 (KHKRRKRKTR…ITIDSDSDKD (64 aa)) form an interaction with UBE2I region. Ser864 and Ser866 each carry phosphoserine. The span at 880 to 897 (KHHKKKKKKHKKKHKKHH) shows a compositional bias: basic residues. Residues Ser912, Ser914, and Ser1028 each carry the phosphoserine modification. A compositionally biased stretch (basic and acidic residues) spans 913–923 (DSDKDSEVKED).

In terms of assembly, interacts with PARK7/DJ-1. Interacts with TOP1. Interacts with p53/TP53; can both ubiquitinate and sumoylate p53/TP53. Interacts with the SUMO1 conjugating enzyme UBE2I. Interacts with SUMO1. Interacts with NKX3-1; polyubiquitinates NKX3-1 and induces its proteasomal degradation. Interacts with SIN3A; sumoylates SIN3A. Interacts with IKBKE; induced by DNA damage. In terms of processing, phosphorylation at Ser-98 regulates the E3 ubiquitin-protein ligase activity but not the SUMO1-protein ligase activity. Phosphorylation at Ser-718 increases the E3 ubiquitin-protein ligase activity versus the SUMO1-protein ligase activity resulting in increased p53/TP53 ubiquitination and degradation. Sumoylated. As to expression, expressed at highest levels in testis and at lower levels in adrenal gland, bone marrow, brain, colon, heart, kidney, liver, muscle, ovary, pancreas, placenta, prostate, skeletal muscle, skin, small intestine, spleen, stomach, testis, thymus, thyroid and uterus. Expressed in the alveolar epithelium of the lung. Expression is commonly decreased in colon adenocarcinomas and lung cancers.

Its subcellular location is the nucleus. It is found in the PML body. It carries out the reaction S-ubiquitinyl-[E2 ubiquitin-conjugating enzyme]-L-cysteine + [acceptor protein]-L-lysine = [E2 ubiquitin-conjugating enzyme]-L-cysteine + N(6)-ubiquitinyl-[acceptor protein]-L-lysine.. Functionally, functions as an E3 ubiquitin-protein ligase and as an E3 SUMO1-protein ligase. Probable tumor suppressor involved in cell growth, cell proliferation and apoptosis that regulates p53/TP53 stability through ubiquitin-dependent degradation. May regulate chromatin modification through sumoylation of several chromatin modification-associated proteins. May be involved in DNA damage-induced cell death through IKBKE sumoylation. The sequence is that of E3 ubiquitin-protein ligase Topors (TOPORS) from Homo sapiens (Human).